The chain runs to 518 residues: Probable Xaa-Pro aminopeptidase HCDG_07916 (518 aa).

Mn(2+) contacts are provided by Asp-289, Asp-300, Glu-437, and Glu-475.

This sequence belongs to the peptidase M24B family. Mn(2+) is required as a cofactor.

It catalyses the reaction Release of any N-terminal amino acid, including proline, that is linked to proline, even from a dipeptide or tripeptide.. Catalyzes the removal of a penultimate prolyl residue from the N-termini of peptides. The sequence is that of Probable Xaa-Pro aminopeptidase HCDG_07916 from Ajellomyces capsulatus (strain H143) (Darling's disease fungus).